The sequence spans 476 residues: Glycogen synthase (476 aa).

Residue Lys15 coordinates ADP-alpha-D-glucose.

This sequence belongs to the glycosyltransferase 1 family. Bacterial/plant glycogen synthase subfamily.

It catalyses the reaction [(1-&gt;4)-alpha-D-glucosyl](n) + ADP-alpha-D-glucose = [(1-&gt;4)-alpha-D-glucosyl](n+1) + ADP + H(+). The protein operates within glycan biosynthesis; glycogen biosynthesis. Synthesizes alpha-1,4-glucan chains using ADP-glucose. In Yersinia pestis bv. Antiqua (strain Antiqua), this protein is Glycogen synthase.